The sequence spans 310 residues: 4-hydroxyproline epimerase (310 aa).

The Proton acceptor role is filled by C88. Residues 89-90 (GH), H208, and D232 contribute to the substrate site. C236 acts as the Proton donor in catalysis. 237 to 238 (GT) lines the substrate pocket.

This sequence belongs to the proline racemase family. In terms of assembly, homodimer.

The catalysed reaction is trans-4-hydroxy-L-proline = cis-4-hydroxy-D-proline. Its activity is regulated as follows. Inhibited by iodoacetate, iodoacetamide and by high amounts (10 mM) of pyrrole-2-carboxylic acid (PYC). Not inhibited by PYC at 1 mM. Allows intracellular utilization of 4-hydroxyproline, one of the major constituents of host collagen, by converting 4-hydroxy-L-proline to 4-hydroxy-D-proline, which can be further metabolized by intracellular 4-hydroxy-D-proline oxidases. This is 4-hydroxyproline epimerase from Burkholderia pseudomallei (strain K96243).